Here is an 829-residue protein sequence, read N- to C-terminus: Colorectal mutant cancer protein (829 aa).

3 disordered regions span residues 114–139 (RSEL…TSVS), 282–320 (TRLQ…SSND), and 672–700 (EEQK…CADA). The segment covering 123 to 132 (EVNEDSRSMD) has biased composition (basic and acidic residues). The span at 285–312 (QSVQATGPSSPGRLTSTNRPINPSTGEL) shows a compositional bias: polar residues. The span at 689–698 (SKDKPGKECA) shows a compositional bias: basic and acidic residues. A Nuclear localization signal motif is present at residues 766–782 (KRANSNLVAAYEKAKKK). The PDZ-binding signature appears at 826-829 (ETSL). S828 bears the Phosphoserine mark.

This sequence belongs to the MCC family. Interacts with SCRIB (via phosphorylated PDZ-binding motif), EZR, SNX27, NHERF1 and NHERF2. Interacts with CTNNB1; the interaction is enhanced upon Wnt stimulation. Interacts with MYH10. Interacts with CCAR2. As to expression, expressed in a variety of tissues.

The protein localises to the cell membrane. The protein resides in the cell projection. It localises to the lamellipodium. It is found in the nucleus. Its subcellular location is the cytoplasm. Functionally, candidate for the putative colorectal tumor suppressor gene located at 5q21. Suppresses cell proliferation and the Wnt/b-catenin pathway in colorectal cancer cells. Inhibits DNA binding of b-catenin/TCF/LEF transcription factors. Involved in cell migration independently of RAC1, CDC42 and p21-activated kinase (PAK) activation. Represses the beta-catenin pathway (canonical Wnt signaling pathway) in a CCAR2-dependent manner by sequestering CCAR2 to the cytoplasm, thereby impairing its ability to inhibit SIRT1 which is involved in the deacetylation and negative regulation of beta-catenin (CTNB1) transcriptional activity. In Homo sapiens (Human), this protein is Colorectal mutant cancer protein (MCC).